Reading from the N-terminus, the 186-residue chain is Threonylcarbamoyl-AMP synthase (186 aa).

The region spanning 2 to 186 (STEFEQAVAA…ARTGAVIRPS (185 aa)) is the YrdC-like domain.

The protein belongs to the SUA5 family. TsaC subfamily.

It is found in the cytoplasm. It catalyses the reaction L-threonine + hydrogencarbonate + ATP = L-threonylcarbamoyladenylate + diphosphate + H2O. Required for the formation of a threonylcarbamoyl group on adenosine at position 37 (t(6)A37) in tRNAs that read codons beginning with adenine. Catalyzes the conversion of L-threonine, HCO(3)(-)/CO(2) and ATP to give threonylcarbamoyl-AMP (TC-AMP) as the acyladenylate intermediate, with the release of diphosphate. The polypeptide is Threonylcarbamoyl-AMP synthase (Aeromonas salmonicida (strain A449)).